A 391-amino-acid polypeptide reads, in one-letter code: UPF0229 protein BCA_0588 (391 aa).

Residues 1-16 (MGEENQPNYTISQENW) show a composition bias toward polar residues. 2 disordered regions span residues 1-31 (MGEENQPNYTISQENWSLHRKGYDDQQRHQE) and 80-117 (HVGQGNGDSKVGDVVARDGSGGQKQKGPGKGQGAGDAA). The segment covering 21 to 31 (KGYDDQQRHQE) has biased composition (basic and acidic residues). The span at 98-115 (GSGGQKQKGPGKGQGAGD) shows a compositional bias: gly residues.

Belongs to the UPF0229 family.

The protein is UPF0229 protein BCA_0588 of Bacillus cereus (strain 03BB102).